A 156-amino-acid chain; its full sequence is Small ribosomal subunit protein uS7 (156 aa).

The protein belongs to the universal ribosomal protein uS7 family. As to quaternary structure, part of the 30S ribosomal subunit. Contacts proteins S9 and S11.

In terms of biological role, one of the primary rRNA binding proteins, it binds directly to 16S rRNA where it nucleates assembly of the head domain of the 30S subunit. Is located at the subunit interface close to the decoding center, probably blocks exit of the E-site tRNA. This Dehalococcoides mccartyi (strain ATCC BAA-2266 / KCTC 15142 / 195) (Dehalococcoides ethenogenes (strain 195)) protein is Small ribosomal subunit protein uS7.